A 495-amino-acid chain; its full sequence is MTTDSEQPNTDFRPEARAPRGFADKRARDLRAERAILEAVSAVYERYGFEALDTGAFEYADALGKFLPDSDRPNEGVFALQDDDDQWMALRYDLTAPLARFAAQNWETLPKPFRRYAFGPVWRNEKPGPGRFRQFIQCDADTVGSARPEADAEIIAMAVEGLEAAGLPRGTAVLKINNRKLLNGLLTAAGADSAGQKLAVLRAVDKLDRLGVDGVRLLLGEGRLDESGDFTKGAGLKGKAVDQVLDFVQAGSTGGRAATLDNIARVVAGSAEGDEGLLELSRIDAALSSLGIADDQAFIDPSIVRGLEYYTGAVFEAELLLSTTDEKGNKVSFGSIGGGGRYDDLVARFTGNVTPATGFSFGVSRLAAALRAAGREPGGAARGPVVVITFDQAHMGEYFSVVGQLRAAGIAAEVYLGTSGMKPQMKYADRRGAPAVVMLGGDEIAAGTVTIKDLDAGRMAAEGLTDNAAWKAERPGQQTIPRDQLVDAVRKIIGG.

Residues 1-10 (MTTDSEQPNT) are compositionally biased toward polar residues. The interval 1–24 (MTTDSEQPNTDFRPEARAPRGFAD) is disordered. Positions 12–24 (FRPEARAPRGFAD) are enriched in basic and acidic residues.

This sequence belongs to the class-II aminoacyl-tRNA synthetase family. As to quaternary structure, homodimer.

It localises to the cytoplasm. The catalysed reaction is tRNA(His) + L-histidine + ATP = L-histidyl-tRNA(His) + AMP + diphosphate + H(+). The chain is Histidine--tRNA ligase (hisS) from Caulobacter vibrioides (strain ATCC 19089 / CIP 103742 / CB 15) (Caulobacter crescentus).